A 410-amino-acid polypeptide reads, in one-letter code: D-amino acid dehydrogenase (410 aa).

Glycine 9–glycine 14 contributes to the FAD binding site.

Belongs to the DadA oxidoreductase family. FAD serves as cofactor.

Its subcellular location is the cell inner membrane. The enzyme catalyses a D-alpha-amino acid + a quinone + H2O = a 2-oxocarboxylate + a quinol + NH4(+). Its activity is regulated as follows. Activity is markedly inhibited by benzoate, and moderately by SH reagents such as p-hydroxymercuribenzoate, iodoacetamide, and iodoacetate. In terms of biological role, catalyzes the oxidative deamination of D-amino acids. Has broad substrate specificity; is mostly active on D-proline, and to a lesser extent, on several other D-amino acids such as D-alanine, D-phenylalanine and D-serine. Mediates electron transport from D-proline to coenzyme Q1 in vitro, and is involved in the electron transport chain from D-proline to the c-type cytochrome in vivo. The chain is D-amino acid dehydrogenase from Helicobacter pylori (Campylobacter pylori).